Reading from the N-terminus, the 799-residue chain is MTAEADLLEGYDEELGGNESQKRDCKGITTAIVVVLLILVMIFAALVFFTPLFAAKSFGSWRLNVSDLRSLRYPYAEFAFTDNNAVVMQSWEGVEIVEDGVSRLIFGRENGAEITPSADRKYFAMMDHAPNPGMNPQNETFHLKIVNNNERLNPLLPFEVEELFRELSDSRITYDIGLRKEESVIQAFKWNGKFNDFVFVESNKIYYQSSPEEEGLTRVSNGGEHTVDGLFDWIYEEEIFGRKDAMWWSTKGDQLAYASYDNHLTKNVSLKTYHRLEPYPIDTNFHYPKTFAKVLPTYTLSIWNKKTEQSRQLDVQLKDSLSYHYLLAVKWLEINGTEQLVSVWTNRYQNEVALTICDWDTAICRLEFEYKYASKRWVTHDDFHSITSFEDTLFFLLPHDKRDNAFQQVASLRLSHGQLRTPKFLNLGEYDVTSINGINKETRTIFFHAAAPKPSHRSLFSYSLADESRNSAYCISCSIKNCTWAQAQMDDQMKTAIVSCKGPAAPHTAIVNLTRMDSDKKTEHANLLYDKTYQNRVEEAGLPVIIKETIKISDDFDALIKLSIPKDIYNRDKHQAIPLIVHVYGGPNDQNTKEATQIGIEEVVASASQAAILRIDGRGSGGRGWKYRSAIYGQLGTVEVEDQIKAIKVVLRLYRHLLDARRVAVFGWSYGGFMTLSMVNEAPEQFFKCAVSVAPVTNFAYYDATYTERYMGDAPLESYSDVTKKLDNFKSTRLLLMHGLLDDNVHFQNSAILIDELQNRGVDFDLMVYPNQAHSLSSRTSHVVGKMTHFLRQCFYTDK.

Residues 1 to 31 (MTAEADLLEGYDEELGGNESQKRDCKGITTA) are Cytoplasmic-facing. The chain crosses the membrane as a helical; Signal-anchor for type II membrane protein span at residues 32-52 (IVVVLLILVMIFAALVFFTPL). At 53–799 (FAAKSFGSWR…FLRQCFYTDK (747 aa)) the chain is on the lumenal side. Asn-64, Asn-138, Asn-267, and Asn-335 each carry an N-linked (GlcNAc...) asparagine glycan. Cys-474 and Cys-477 are joined by a disulfide. An N-linked (GlcNAc...) asparagine glycan is attached at Asn-481. A disulfide bridge connects residues Cys-482 and Cys-500. Asn-512 carries an N-linked (GlcNAc...) asparagine glycan. Residues Ser-669, Asp-742, and His-774 each act as charge relay system in the active site. A disulfide bond links Cys-689 and Cys-794.

Belongs to the peptidase S9B family. DPPIV subfamily.

It localises to the cell membrane. Functionally, removes N-terminal dipeptides sequentially from polypeptides. Essential for control of distal tip cell migration. The protein is Dipeptidyl peptidase family member 1 (dpf-1) of Caenorhabditis elegans.